Reading from the N-terminus, the 574-residue chain is Serine/arginine repetitive matrix protein 4 (574 aa).

Disordered regions lie at residues 45–217 (LETP…HGGD), 257–291 (IVQN…ITRS), 366–422 (DLIS…SYSL), 454–508 (YCSS…VSSR), and 526–574 (RSRS…RARR). Basic and acidic residues predominate over residues 51-72 (PKDDEEKVKAKDLVTKTHEKNG). Composition is skewed to basic residues over residues 73-88 (HIKR…RRAR), 102-120 (PKTK…RHRS), and 128-184 (VRKK…HRKA). The span at 194–217 (NRSEDCEKSGFRDGGRSSDVHGGD) shows a compositional bias: basic and acidic residues. The span at 275-289 (GNDTSSPPSSKTGIT) shows a compositional bias: polar residues. The segment covering 366 to 385 (DLISDRNRSPSHDRYEDGTR) has biased composition (basic and acidic residues). Residues 405–422 (RSLSSGRRSYSRSSSYSL) are compositionally biased toward low complexity. Positions 454-477 (YCSSCKSRKHSRRRPSSPMRKRRR) are enriched in basic residues. Residues 478–487 (DSPSHLEARR) are compositionally biased toward basic and acidic residues. Residues 496 to 508 (IPYYRPSPSVSSR) show a composition bias toward low complexity. Over residues 526–539 (RSRSCSRSRSRSHS) the composition is skewed to basic residues. Residues 540–559 (HTYSSYRSYSRSSSWNSLYS) show a composition bias toward low complexity. Residues 560-574 (RRSRSRSRSYSRARR) show a composition bias toward basic residues.

It belongs to the nSR100 family.

It localises to the nucleus. Splicing factor specifically required for neural cell differentiation. Acts in conjunction with nPTB/PTBP2 by binding directly to its regulated target transcripts and promotes neural-specific exon inclusion in many genes that function in neural cell differentiation. Required to promote the inclusion of neural-specific exon 10 in nPTB/PTBP2, leading to increased expression of neural-specific nPTB/PTBP2. This is Serine/arginine repetitive matrix protein 4 (srrm4) from Danio rerio (Zebrafish).